A 570-amino-acid polypeptide reads, in one-letter code: Rqc2 homolog RqcH (570 aa).

The segment at 1 to 173 is NFACT-N domain; it reads MSFDGMFTYG…LPPAQDKISP (173 aa). Residues 179–281 are hhH domain; it reads DDILRHLSFQ…ELLDRFYFGK (103 aa). Coiled-coil stretches lie at residues 279–336 and 368–430; these read FGKA…TANL and TPSE…VEGK. The tract at residues 282-434 is coiled-coil-M (CCM); that stretch reads AERDRVKQQA…ELVEGKYLRP (153 aa). Residues 446-570 form an NFACT-R region; it reads HNPVLETYES…ADTVIKLKKS (125 aa).

This sequence belongs to the NEMF family. In terms of assembly, associates with isolated or stalled 50S ribosomal subunits. Binds to RqcP. Interacts with ribosomal protein uL11. Displaced from the 50S subunit by thiostrepton. In crystallized 50S subunits RqcH is variously associated with A/P-site tRNA, P-site tRNA and RqcP, an E-site tRNA or A- and P-site tRNAs and RqcP2(YlmH).

Functionally, key component of the ribosome quality control system (RQC), a ribosome-associated complex that mediates the extraction of incompletely synthesized nascent chains from stalled ribosomes and their subsequent degradation. RqcH recruits Ala-charged tRNA, and with RqcP directs the elongation of stalled nascent chains on 50S ribosomal subunits, leading to non-templated C-terminal alanine extensions (Ala tail). The Ala tail promotes nascent chain degradation. RqcH, RqcP and charged tRNA(Ala) are necessary and sufficient to add an Ala tail to a model stalled nascent peptide; does not add Val. Binds the P-site tRNA in 50S ribosomal subunit, unwinds the anticodon stem and interacts with the splayed anticodon. Selectively binds tRNA(Ala) isoacceptors, even in the absence of the 50S ribosomal subunit. Adds between 1 and at least 8 Ala residues to the nascent chain; detection of the Ala tail requires either deletion of clpP or its inhibition. Binds to 50S ribosomal subunits, at least 30% of which contain a P-site tRNA and thus are obstructed. In Bacillus subtilis (strain 168), this protein is Rqc2 homolog RqcH.